The chain runs to 361 residues: Probable dual-specificity RNA methyltransferase RlmN (361 aa).

E91 acts as the Proton acceptor in catalysis. A Radical SAM core domain is found at Q97–R329. The cysteines at positions 104 and 340 are disulfide-linked. Residues C111, C115, and C118 each contribute to the [4Fe-4S] cluster site. Residues G163–E164, S195, S218–H220, and N296 contribute to the S-adenosyl-L-methionine site. C340 serves as the catalytic S-methylcysteine intermediate.

It belongs to the radical SAM superfamily. RlmN family. It depends on [4Fe-4S] cluster as a cofactor.

It is found in the cytoplasm. It carries out the reaction adenosine(2503) in 23S rRNA + 2 reduced [2Fe-2S]-[ferredoxin] + 2 S-adenosyl-L-methionine = 2-methyladenosine(2503) in 23S rRNA + 5'-deoxyadenosine + L-methionine + 2 oxidized [2Fe-2S]-[ferredoxin] + S-adenosyl-L-homocysteine. The enzyme catalyses adenosine(37) in tRNA + 2 reduced [2Fe-2S]-[ferredoxin] + 2 S-adenosyl-L-methionine = 2-methyladenosine(37) in tRNA + 5'-deoxyadenosine + L-methionine + 2 oxidized [2Fe-2S]-[ferredoxin] + S-adenosyl-L-homocysteine. Its function is as follows. Specifically methylates position 2 of adenine 2503 in 23S rRNA and position 2 of adenine 37 in tRNAs. The protein is Probable dual-specificity RNA methyltransferase RlmN of Streptococcus pneumoniae (strain Hungary19A-6).